Here is a 464-residue protein sequence, read N- to C-terminus: MTAQLSKKSEAWSARFNEPVSDLVKRYTASVFFDKRLAQVDIQGSLAHAEMLAHQKIISQQDHAEIQRGMAQIQEEIASGKFEWLLDLEDVHLNIEKRLTELVGDAGKRLHTGRSRNDQVATDIRLYVRSEIDNIVGLLRDLRLALLDLAEKHADTILPGFTHMQVAQPITFGHHMLAYVEMFSRDAERMLDCRKRVNRLPLGAAALAGTTFPIDRERVARTLDFEDVCHNSLDAVSDRDFAIEFCAAAALIMTHVSRMSEELVIWMSPRVGFIDIADRFCTGSSIMPQKKNPDVPELARGKTGRVNGHLIALLTLMKGQPLAYNKDNQEDKEPLFDTVDTVVDTLRIFADMATGITVKPDAMRAAALQGYATATDLADYLVKKGLPFRDAHEAVAHAVRACVDRGCDLSDLTLEEMRVFSPLIEADIFEVLTLEGSVAARNHIGGTAPQQVRLAIARHRSKLN.

The protein belongs to the lyase 1 family. Argininosuccinate lyase subfamily.

Its subcellular location is the cytoplasm. The catalysed reaction is 2-(N(omega)-L-arginino)succinate = fumarate + L-arginine. The protein operates within amino-acid biosynthesis; L-arginine biosynthesis; L-arginine from L-ornithine and carbamoyl phosphate: step 3/3. The polypeptide is Argininosuccinate lyase (Janthinobacterium sp. (strain Marseille) (Minibacterium massiliensis)).